Here is a 174-residue protein sequence, read N- to C-terminus: Probasin (174 aa).

Positions 1-18 (MMRVIILLLTLHVLGVSS) are cleaved as a signal peptide. C77 and C168 are joined by a disulfide.

This sequence belongs to the calycin superfamily. Lipocalin family.

It localises to the secreted. The polypeptide is Probasin (Pbsn) (Mus musculus (Mouse)).